Consider the following 270-residue polypeptide: Glyoxylate pathway regulator (270 aa).

Positions 1–33 (MNTEIPDLEKQQIDHNSGSDDPQPIHDDMAPVS) are disordered. Position 58 is a phosphotyrosine (tyrosine 58). Serine 74 carries the post-translational modification Phosphoserine. Transmembrane regions (helical) follow at residues 80-100 (PAPL…LCTV), 109-129 (SIAV…AGMW), 137-157 (FGAA…AIEM), 175-195 (AVGI…LCTL), 198-218 (TVAF…LACA), and 227-247 (AIGG…NAYA).

Belongs to the acetate uptake transporter (AceTr) (TC 2.A.96) family.

It is found in the membrane. Functionally, plays a role in the adaptation of cell metabolism to the utilization of acetic acid, possibly by inhibiting an anion-transporting ATPase and affecting the plasma membrane H(+)-ATPase. May be indirectly involved in the repression of genes encoding glyoxylate cycle enzymes. This chain is Glyoxylate pathway regulator (GPR1), found in Yarrowia lipolytica (strain CLIB 122 / E 150) (Yeast).